A 369-amino-acid chain; its full sequence is tRNA/tmRNA (uracil-C(5))-methyltransferase (369 aa).

Positions 190, 218, 223, 239, and 301 each coordinate S-adenosyl-L-methionine. Cysteine 326 serves as the catalytic Nucleophile. Residue glutamate 360 is the Proton acceptor of the active site.

The protein belongs to the class I-like SAM-binding methyltransferase superfamily. RNA M5U methyltransferase family. TrmA subfamily.

The catalysed reaction is uridine(54) in tRNA + S-adenosyl-L-methionine = 5-methyluridine(54) in tRNA + S-adenosyl-L-homocysteine + H(+). It carries out the reaction uridine(341) in tmRNA + S-adenosyl-L-methionine = 5-methyluridine(341) in tmRNA + S-adenosyl-L-homocysteine + H(+). In terms of biological role, dual-specificity methyltransferase that catalyzes the formation of 5-methyluridine at position 54 (m5U54) in all tRNAs, and that of position 341 (m5U341) in tmRNA (transfer-mRNA). This is tRNA/tmRNA (uracil-C(5))-methyltransferase from Vibrio vulnificus (strain YJ016).